The following is a 478-amino-acid chain: Protein nucleotidyltransferase YdiU (478 aa).

Residues Gly-83, Gly-85, Arg-86, Lys-106, Asp-118, Gly-119, Arg-169, and Arg-176 each coordinate ATP. Asp-245 functions as the Proton acceptor in the catalytic mechanism. The Mg(2+) site is built by Asn-246 and Asp-255. Asp-255 provides a ligand contact to ATP.

Belongs to the SELO family. The cofactor is Mg(2+). Requires Mn(2+) as cofactor.

It carries out the reaction L-seryl-[protein] + ATP = 3-O-(5'-adenylyl)-L-seryl-[protein] + diphosphate. The catalysed reaction is L-threonyl-[protein] + ATP = 3-O-(5'-adenylyl)-L-threonyl-[protein] + diphosphate. It catalyses the reaction L-tyrosyl-[protein] + ATP = O-(5'-adenylyl)-L-tyrosyl-[protein] + diphosphate. The enzyme catalyses L-histidyl-[protein] + UTP = N(tele)-(5'-uridylyl)-L-histidyl-[protein] + diphosphate. It carries out the reaction L-seryl-[protein] + UTP = O-(5'-uridylyl)-L-seryl-[protein] + diphosphate. The catalysed reaction is L-tyrosyl-[protein] + UTP = O-(5'-uridylyl)-L-tyrosyl-[protein] + diphosphate. Nucleotidyltransferase involved in the post-translational modification of proteins. It can catalyze the addition of adenosine monophosphate (AMP) or uridine monophosphate (UMP) to a protein, resulting in modifications known as AMPylation and UMPylation. The polypeptide is Protein nucleotidyltransferase YdiU (Exiguobacterium sp. (strain ATCC BAA-1283 / AT1b)).